We begin with the raw amino-acid sequence, 246 residues long: Exosome complex component SKI6 (246 aa).

The protein belongs to the RNase PH family. As to quaternary structure, component of the RNA exosome complex. Specifically part of the catalytically inactive RNA exosome core complex (Exo-9) which may associate with the catalytic subunits RRP6 and DIS3 in cytoplasmic- and nuclear-specific RNA exosome complex forms. Exo-9 is formed by a hexameric base ring of RNase PH domain-containing subunits and a cap ring consisting of CSL4, RRP4 and RRP40.

The protein resides in the cytoplasm. The protein localises to the nucleus. It is found in the nucleolus. Non-catalytic component of the RNA exosome complex which has 3'-&gt;5' exoribonuclease activity and participates in a multitude of cellular RNA processing and degradation events. In the nucleus, the RNA exosome complex is involved in proper maturation of stable RNA species such as rRNA, snRNA and snoRNA, in the elimination of RNA processing by-products and non-coding 'pervasive' transcripts, such as antisense RNA species and cryptic unstable transcripts (CUTs), and of mRNAs with processing defects, thereby limiting or excluding their export to the cytoplasm. In the cytoplasm, the RNA exosome complex is involved in general mRNA turnover and in RNA surveillance pathways, preventing translation of aberrant mRNAs. The catalytic inactive RNA exosome core complex of 9 subunits (Exo-9) is proposed to play a pivotal role in the binding and presentation of RNA for ribonucleolysis, and to serve as a scaffold for the association with catalytic subunits and accessory proteins or complexes. SKI6 is part of the hexameric ring of RNase PH domain-containing subunits proposed to form a central channel which threads RNA substrates for degradation. This chain is Exosome complex component SKI6 (SKI6), found in Saccharomyces cerevisiae (strain ATCC 204508 / S288c) (Baker's yeast).